A 91-amino-acid polypeptide reads, in one-letter code: MNGLVIIDMNNFAIVYANITFLFYYLLDFTLPFHVCRFLFHSSLENGPQHGQQGAATISRRAHCEKSHPSYYCTQKNMEANRQCYVNGTKT.

A helical transmembrane segment spans residues 12–34; that stretch reads FAIVYANITFLFYYLLDFTLPFH.

It localises to the membrane. This is an uncharacterized protein from Saccharomyces cerevisiae (strain ATCC 204508 / S288c) (Baker's yeast).